A 499-amino-acid chain; its full sequence is Tektin-like protein 1 (499 aa).

Coiled coils occupy residues 197–227 and 297–317; these read SMLT…LKTL and LNEA…MAKN. Position 372 is a phosphotyrosine (Tyr372).

As to quaternary structure, microtubule inner protein component of sperm flagellar doublet microtubules.

It is found in the cytoplasm. Its subcellular location is the cytoskeleton. The protein localises to the flagellum axoneme. Its function is as follows. Microtubule inner protein (MIP) part of the dynein-decorated doublet microtubules (DMTs) in sperm flagellar axoneme, which is required for motile flagellum beating. Forms an extensive interaction network cross-linking the lumen of axonemal doublet microtubules. The polypeptide is Tektin-like protein 1 (Homo sapiens (Human)).